Reading from the N-terminus, the 498-residue chain is Sugar transport protein 2 (498 aa).

Topologically, residues 1 to 22 (MAVGSMNVEEGTKAFPAKLTGQ) are cytoplasmic. A run of 12 helical transmembrane segments spans residues 23–43 (VFLC…DIGI), 80–100 (LLQL…FISS), 117–137 (IFFL…MLIG), 140–160 (ILLG…ISEI), 167–187 (GGLN…ASYV), 200–220 (YSLG…FFIH), 288–308 (LQFF…PVLF), 320–340 (ISTV…LLVV), 348–368 (LLME…GILL), 381–401 (AVPL…AWSW), 421–441 (GYFC…QFFL), and 450–470 (LLFF…VFFL). Topologically, residues 471–498 (PETKGVPIEEMAEKRWKTHPRWKKYFKD) are cytoplasmic.

It belongs to the major facilitator superfamily. Sugar transporter (TC 2.A.1.1) family. In terms of tissue distribution, pollen specific (at protein level).

Its subcellular location is the membrane. In terms of biological role, mediates an active uptake of hexoses, probably by sugar/hydrogen symport. Can transport glucose, 3-O-methylglucose, xylose, mannose, fructose and galactose. This is Sugar transport protein 2 (STP2) from Arabidopsis thaliana (Mouse-ear cress).